The following is a 489-amino-acid chain: CBL-interacting serine/threonine-protein kinase 12 (489 aa).

Residues 26-280 (YEMGKLLGHG…FPEIMENSWF (255 aa)) form the Protein kinase domain. ATP-binding positions include 32–40 (LGHGTFAKV) and lysine 55. Aspartate 148 acts as the Proton acceptor in catalysis. The interval 166 to 195 (DFGLSAVSDQIRQDGLFHTFCGTPAYVAPE) is activation loop. Serine 170 carries the phosphoserine modification. Residue threonine 184 is modified to Phosphothreonine. The region spanning 336-360 (PRPASLNAFDIISFSQGFDLSGLFD) is the NAF domain. Residues 363–392 (GEGSRFVSGAPVSKIISKLEEIAKVVSFTV) are PPI.

It belongs to the protein kinase superfamily. CAMK Ser/Thr protein kinase family. SNF1 subfamily. Interacts with CBL2 and CBL3. Mn(2+) serves as cofactor. Expressed in roots and shoots.

The catalysed reaction is L-seryl-[protein] + ATP = O-phospho-L-seryl-[protein] + ADP + H(+). It catalyses the reaction L-threonyl-[protein] + ATP = O-phospho-L-threonyl-[protein] + ADP + H(+). Its function is as follows. CIPK serine-threonine protein kinases interact with CBL proteins. Binding of a CBL protein to the regulatory NAF domain of CIPK protein lead to the activation of the kinase in a calcium-dependent manner. The sequence is that of CBL-interacting serine/threonine-protein kinase 12 (CIPK12) from Arabidopsis thaliana (Mouse-ear cress).